Here is a 111-residue protein sequence, read N- to C-terminus: BET1-like protein (111 aa).

The Cytoplasmic portion of the chain corresponds to 1–86; it reads MADWTRAQSS…MARSGRDNRK (86 aa). Phosphoserine is present on residues serine 9 and serine 37. In terms of domain architecture, t-SNARE coiled-coil homology spans 15–77; that stretch reads DILDRENKRM…TGSVKRFSTM (63 aa). A helical; Anchor for type IV membrane protein membrane pass occupies residues 87 to 107; it reads LLCGMAVVLIVAFFILSYLLS. The Lumenal segment spans residues 108-111; the sequence is RTRT.

Component of a SNARE complex consisting of STX5, YKT6, GOSR1 and BET1L. Interacts with STX5.

The protein localises to the golgi apparatus membrane. It is found in the golgi apparatus. It localises to the trans-Golgi network membrane. In terms of biological role, vesicle SNARE required for targeting and fusion of retrograde transport vesicles with the Golgi complex. Required for the integrity of the Golgi complex. The polypeptide is BET1-like protein (Mus musculus (Mouse)).